An 875-amino-acid chain; its full sequence is Alanine--tRNA ligase (875 aa).

Zn(2+) contacts are provided by His-564, His-568, Cys-666, and His-670.

The protein belongs to the class-II aminoacyl-tRNA synthetase family. As to quaternary structure, homotetramer. It depends on Zn(2+) as a cofactor.

It localises to the cytoplasm. It carries out the reaction tRNA(Ala) + L-alanine + ATP = L-alanyl-tRNA(Ala) + AMP + diphosphate. Its function is as follows. Catalyzes the attachment of alanine to tRNA(Ala) in a two-step reaction: alanine is first activated by ATP to form Ala-AMP and then transferred to the acceptor end of tRNA(Ala). Also edits incorrectly charged Ser-tRNA(Ala) and Gly-tRNA(Ala) via its editing domain. This is Alanine--tRNA ligase from Klebsiella pneumoniae subsp. pneumoniae (strain ATCC 700721 / MGH 78578).